Reading from the N-terminus, the 457-residue chain is tRNA modification GTPase MnmE (457 aa).

The (6S)-5-formyl-5,6,7,8-tetrahydrofolate site is built by arginine 22, glutamate 83, and arginine 122. Residues 219 to 378 (GLATAIIGRP…LEEAIKTLFF (160 aa)) enclose the TrmE-type G domain. Residue asparagine 229 coordinates K(+). Residues 229–234 (NVGKSS), 248–254 (TDIAGTT), and 273–276 (DTAG) each bind GTP. Serine 233 is a binding site for Mg(2+). K(+)-binding residues include threonine 248, isoleucine 250, and threonine 253. Threonine 254 contacts Mg(2+). Lysine 457 provides a ligand contact to (6S)-5-formyl-5,6,7,8-tetrahydrofolate.

The protein belongs to the TRAFAC class TrmE-Era-EngA-EngB-Septin-like GTPase superfamily. TrmE GTPase family. Homodimer. Heterotetramer of two MnmE and two MnmG subunits. It depends on K(+) as a cofactor.

It is found in the cytoplasm. Its function is as follows. Exhibits a very high intrinsic GTPase hydrolysis rate. Involved in the addition of a carboxymethylaminomethyl (cmnm) group at the wobble position (U34) of certain tRNAs, forming tRNA-cmnm(5)s(2)U34. The polypeptide is tRNA modification GTPase MnmE (Listeria welshimeri serovar 6b (strain ATCC 35897 / DSM 20650 / CCUG 15529 / CIP 8149 / NCTC 11857 / SLCC 5334 / V8)).